We begin with the raw amino-acid sequence, 397 residues long: Succinyl-diaminopimelate desuccinylase (397 aa).

Residue histidine 73 coordinates Zn(2+). Aspartate 75 is an active-site residue. Aspartate 106 lines the Zn(2+) pocket. Residue glutamate 140 is the Proton acceptor of the active site. The Zn(2+) site is built by glutamate 141, glutamate 169, and histidine 366.

It belongs to the peptidase M20A family. DapE subfamily. In terms of assembly, homodimer. Requires Zn(2+) as cofactor. It depends on Co(2+) as a cofactor.

It carries out the reaction N-succinyl-(2S,6S)-2,6-diaminopimelate + H2O = (2S,6S)-2,6-diaminopimelate + succinate. It functions in the pathway amino-acid biosynthesis; L-lysine biosynthesis via DAP pathway; LL-2,6-diaminopimelate from (S)-tetrahydrodipicolinate (succinylase route): step 3/3. Functionally, catalyzes the hydrolysis of N-succinyl-L,L-diaminopimelic acid (SDAP), forming succinate and LL-2,6-diaminopimelate (DAP), an intermediate involved in the bacterial biosynthesis of lysine and meso-diaminopimelic acid, an essential component of bacterial cell walls. This Rhizobium etli (strain ATCC 51251 / DSM 11541 / JCM 21823 / NBRC 15573 / CFN 42) protein is Succinyl-diaminopimelate desuccinylase.